We begin with the raw amino-acid sequence, 620 residues long: Chaperone protein DnaK (620 aa).

Position 197 is a phosphothreonine; by autocatalysis (Thr197). The tract at residues 591-620 (AQKLGEAMANKNNAEQPKKKDDDVIDAEVE) is disordered.

The protein belongs to the heat shock protein 70 family.

In terms of biological role, acts as a chaperone. This Helicobacter pylori (strain HPAG1) protein is Chaperone protein DnaK.